Consider the following 482-residue polypeptide: Ribulose bisphosphate carboxylase large chain (482 aa).

Positions 1 to 2 (MS) are excised as a propeptide. The residue at position 3 (proline 3) is an N-acetylproline. The residue at position 14 (lysine 14) is an N6,N6,N6-trimethyllysine. The substrate site is built by asparagine 123 and threonine 173. The active-site Proton acceptor is the lysine 175. Lysine 177 provides a ligand contact to substrate. The Mg(2+) site is built by lysine 201, aspartate 203, and glutamate 204. Lysine 201 carries the post-translational modification N6-carboxylysine. The active-site Proton acceptor is histidine 294. Substrate contacts are provided by arginine 295, histidine 327, and serine 379.

It belongs to the RuBisCO large chain family. Type I subfamily. Heterohexadecamer of 8 large chains and 8 small chains; disulfide-linked. The disulfide link is formed within the large subunit homodimers. Mg(2+) is required as a cofactor. The disulfide bond which can form in the large chain dimeric partners within the hexadecamer appears to be associated with oxidative stress and protein turnover.

It is found in the plastid. The protein localises to the chloroplast. It carries out the reaction 2 (2R)-3-phosphoglycerate + 2 H(+) = D-ribulose 1,5-bisphosphate + CO2 + H2O. The catalysed reaction is D-ribulose 1,5-bisphosphate + O2 = 2-phosphoglycolate + (2R)-3-phosphoglycerate + 2 H(+). Functionally, ruBisCO catalyzes two reactions: the carboxylation of D-ribulose 1,5-bisphosphate, the primary event in carbon dioxide fixation, as well as the oxidative fragmentation of the pentose substrate in the photorespiration process. Both reactions occur simultaneously and in competition at the same active site. The polypeptide is Ribulose bisphosphate carboxylase large chain (Phytolacca americana (American pokeweed)).